Reading from the N-terminus, the 494-residue chain is GDP-fucose protein O-fucosyltransferase 4 (494 aa).

The Cytoplasmic segment spans residues 1-7; sequence MAARYTE. A helical; Signal-anchor for type II membrane protein transmembrane segment spans residues 8–24; the sequence is AVLAALGVLSVCSASSS. Over 25-494 the chain is Lumenal; sequence SGSGASGKAG…EIFMKRNKNL (470 aa). Asn167 is a glycosylation site (N-linked (GlcNAc...) asparagine). Residues Cys390 and Cys393 are joined by a disulfide bond.

The protein belongs to the glycosyltransferase 10 family.

The protein resides in the endoplasmic reticulum membrane. The enzyme catalyses L-threonyl-[protein] + GDP-beta-L-fucose = 3-O-(alpha-L-fucosyl)-L-threonyl-[protein] + GDP + H(+). It carries out the reaction L-seryl-[protein] + GDP-beta-L-fucose = 3-O-(alpha-L-fucosyl)-L-seryl-[protein] + GDP + H(+). The protein operates within protein modification; protein glycosylation. Protein O-fucosyltransferase that specifically catalyzes O-fucosylation of serine or threonine residues in EMI domains of target proteins, such as MMRN1, MMRN2 and EMID1. Attaches fucose through an O-glycosidic linkage. O-fucosylation of EMI domain-containing proteins may be required for facilitating protein folding and secretion. Also shows minor alpha-(1,3)-fucosyltransferase activity toward activity toward biantennary N-glycan acceptors. However, this was tested with a library of synthetic substrates and this activity is unsure in vivo. This Rattus norvegicus (Rat) protein is GDP-fucose protein O-fucosyltransferase 4 (Fut11).